The chain runs to 39 residues: Sarcotoxin-1C (39 aa).

An Arginine amide modification is found at Arg-39.

The protein belongs to the cecropin family.

The protein localises to the secreted. Functionally, sarcotoxins, which are potent bactericidal proteins, are produced in response to injury. They are cytotoxic to both Gram-positive and Gram-negative bacteria. In Sarcophaga peregrina (Flesh fly), this protein is Sarcotoxin-1C.